We begin with the raw amino-acid sequence, 668 residues long: L-type lectin-domain containing receptor kinase I.7 (668 aa).

The N-terminal stretch at 1–21 (MIRGLLLGIIWMIFCVCSSFQ) is a signal peptide. Residues 22 to 285 (QETPFVYNNF…SSTKKKSTSP (264 aa)) lie on the Extracellular side of the membrane. Residues 24 to 256 (TPFVYNNFGH…YQYILGWSFS (233 aa)) are legume-lectin like. N-linked (GlcNAc...) asparagine glycans are attached at residues Asn56, Asn125, Asn167, Asn201, and Asn223. A helical membrane pass occupies residues 286-306 (VLSVLLGLIAFIVLGILVVAY). Over 307 to 668 (LYRRNLYSEV…THSVLYGSGR (362 aa)) the chain is Cytoplasmic. The Protein kinase domain maps to 341–620 (FNRSEFLGRG…LNGNLALPEF (280 aa)). ATP contacts are provided by residues 347–355 (LGRGGFGEV) and Lys372. Catalysis depends on Asp468, which acts as the Proton acceptor.

This sequence in the C-terminal section; belongs to the protein kinase superfamily. Ser/Thr protein kinase family. In the N-terminal section; belongs to the leguminous lectin family.

The protein resides in the cell membrane. It carries out the reaction L-seryl-[protein] + ATP = O-phospho-L-seryl-[protein] + ADP + H(+). The enzyme catalyses L-threonyl-[protein] + ATP = O-phospho-L-threonyl-[protein] + ADP + H(+). Involved in resistance response to the pathogenic oomycetes Phytophthora infestans and Phytophthora capsici. This is L-type lectin-domain containing receptor kinase I.7 from Arabidopsis thaliana (Mouse-ear cress).